The primary structure comprises 220 residues: Deoxyribose-phosphate aldolase (220 aa).

Asp-89 (proton donor/acceptor) is an active-site residue. The active-site Schiff-base intermediate with acetaldehyde is Lys-151. Lys-180 serves as the catalytic Proton donor/acceptor.

Belongs to the DeoC/FbaB aldolase family. DeoC type 1 subfamily.

It localises to the cytoplasm. It carries out the reaction 2-deoxy-D-ribose 5-phosphate = D-glyceraldehyde 3-phosphate + acetaldehyde. Its pathway is carbohydrate degradation; 2-deoxy-D-ribose 1-phosphate degradation; D-glyceraldehyde 3-phosphate and acetaldehyde from 2-deoxy-alpha-D-ribose 1-phosphate: step 2/2. Catalyzes a reversible aldol reaction between acetaldehyde and D-glyceraldehyde 3-phosphate to generate 2-deoxy-D-ribose 5-phosphate. The polypeptide is Deoxyribose-phosphate aldolase (Lactococcus lactis subsp. cremoris (strain SK11)).